The sequence spans 466 residues: Glutamate--tRNA ligase 2 (466 aa).

The 'HIGH' region motif lies at 9–19 (PSPTGSLHLGG). A 'KMSKS' region motif is present at residues 236–240 (KLSKR). Lys-239 contributes to the ATP binding site.

This sequence belongs to the class-I aminoacyl-tRNA synthetase family. Glutamate--tRNA ligase type 1 subfamily. In terms of assembly, monomer.

It is found in the cytoplasm. It catalyses the reaction tRNA(Glu) + L-glutamate + ATP = L-glutamyl-tRNA(Glu) + AMP + diphosphate. In terms of biological role, catalyzes the attachment of glutamate to tRNA(Glu) in a two-step reaction: glutamate is first activated by ATP to form Glu-AMP and then transferred to the acceptor end of tRNA(Glu). This Anaplasma marginale (strain St. Maries) protein is Glutamate--tRNA ligase 2.